The primary structure comprises 435 residues: Light-independent protochlorophyllide reductase subunit N (435 aa).

Residues C23, C48, and C108 each coordinate [4Fe-4S] cluster.

Belongs to the BchN/ChlN family. Protochlorophyllide reductase is composed of three subunits; ChlL, ChlN and ChlB. Forms a heterotetramer of two ChlB and two ChlN subunits. [4Fe-4S] cluster is required as a cofactor.

The protein localises to the plastid. Its subcellular location is the chloroplast. It carries out the reaction chlorophyllide a + oxidized 2[4Fe-4S]-[ferredoxin] + 2 ADP + 2 phosphate = protochlorophyllide a + reduced 2[4Fe-4S]-[ferredoxin] + 2 ATP + 2 H2O. The protein operates within porphyrin-containing compound metabolism; chlorophyll biosynthesis (light-independent). In terms of biological role, component of the dark-operative protochlorophyllide reductase (DPOR) that uses Mg-ATP and reduced ferredoxin to reduce ring D of protochlorophyllide (Pchlide) to form chlorophyllide a (Chlide). This reaction is light-independent. The NB-protein (ChlN-ChlB) is the catalytic component of the complex. The protein is Light-independent protochlorophyllide reductase subunit N of Auxenochlorella protothecoides (Green microalga).